The sequence spans 163 residues: Probable RNA-binding protein EIF1AD (163 aa).

The region spanning Met-18 to Thr-96 is the S1-like domain. The interval Ala-106–Asp-163 is disordered. Composition is skewed to acidic residues over residues Asp-126–Leu-136 and Glu-146–Asp-163.

The protein belongs to the EIF1AD family.

This is Probable RNA-binding protein EIF1AD from Drosophila pseudoobscura pseudoobscura (Fruit fly).